The following is a 622-amino-acid chain: Pesticidal crystal protein Cry2Ac (622 aa).

It belongs to the delta endotoxin family.

Promotes colloidosmotic lysis by binding to the midgut epithelial cells of lepidopteran larvae. Has low activity on dipteran larvae. The protein is Pesticidal crystal protein Cry2Ac (cry2Ac) of Bacillus thuringiensis.